The chain runs to 599 residues: Group II intron-encoded protein LtrA (599 aa).

The region spanning 70–361 is the Reverse transcriptase domain; that stretch reads IIQSLKDGTY…QPARFLGYDI (292 aa). Positions 381–549 are intron maturase type-2; that stretch reads NGSVELLIPL…AKCCELCGTS (169 aa).

This sequence in the N-terminal section; belongs to the bacterial reverse transcriptase family. In terms of assembly, homodimer. Mg(2+) serves as cofactor.

It carries out the reaction DNA(n) + a 2'-deoxyribonucleoside 5'-triphosphate = DNA(n+1) + diphosphate. In terms of biological role, multifunctional protein that promotes group II intron splicing and mobility by acting both on RNA and DNA. It has three activities: reverse transcriptase (RT) for intron duplication, maturase to promote splicing, and DNA endonuclease for site-specific cleavage of recipient alleles. The intron-encoded protein promotes splicing by facilitating the formation of the catalytically active structure of the intron RNA. After splicing, the protein remains bound to the excised intron lariat RNA, forming ribonucleoprotein particles, and cleaving the antisense strand of the recipient DNA in the 3' exon. After DNA cleavage, retrohoming occurs by a target DNA-primed reverse transcription of the intron RNA that had reverse spliced into the sense strand of the recipient DNA. It also contributes to the recognition of the DNA target site and acts as a repressor of its own translation. This Lactococcus lactis subsp. cremoris (Streptococcus cremoris) protein is Group II intron-encoded protein LtrA (ltrA).